The following is a 206-amino-acid chain: Protein MIS12 homolog (206 aa).

Residues 102-206 (DKCQETNPFS…EKESRRLETQ (105 aa)) are a coiled coil.

Belongs to the mis12 family. As to quaternary structure, component of the MIS12 complex composed of MIS12, DSN1, NSL1 and PMF1. Also interacts with KNL1, CBX3, CBX5, NDC80 and ZWINT.

The protein localises to the chromosome. Its subcellular location is the centromere. It is found in the kinetochore. In terms of biological role, part of the MIS12 complex which is required for normal chromosome alignment and segregation and for kinetochore formation during mitosis. Essential for proper kinetochore microtubule attachments. The chain is Protein MIS12 homolog from Mus musculus (Mouse).